Consider the following 361-residue polypeptide: ATP-dependent 6-phosphofructokinase 1 (361 aa).

ATP is bound by residues G14, K79–G80, and G116–S119. D117 contacts Mg(2+). Residues T140–D142, R177, M184–R186, E237, R278, and H284–R287 each bind substrate. Catalysis depends on D142, which acts as the Proton acceptor.

This sequence belongs to the phosphofructokinase type A (PFKA) family. Mixed-substrate PFK group III subfamily. In terms of assembly, homodimer or homotetramer. Mg(2+) is required as a cofactor.

It is found in the cytoplasm. It catalyses the reaction beta-D-fructose 6-phosphate + ATP = beta-D-fructose 1,6-bisphosphate + ADP + H(+). Its pathway is carbohydrate degradation; glycolysis; D-glyceraldehyde 3-phosphate and glycerone phosphate from D-glucose: step 3/4. Its function is as follows. Catalyzes the phosphorylation of D-fructose 6-phosphate to fructose 1,6-bisphosphate by ATP, the first committing step of glycolysis. The chain is ATP-dependent 6-phosphofructokinase 1 from Synechocystis sp. (strain ATCC 27184 / PCC 6803 / Kazusa).